We begin with the raw amino-acid sequence, 117 residues long: MKLCAVIIASLLVCAAVASSSDNQKEFAQEKEMTREETQSLGEHEKDDEVTGSEERSCIEEWKTCENDCECCGMSTLCAASWVDGHQIKLCRNEGGKLKKVLHFIQKSVSKIKSCKK.

A signal peptide spans 1–20 (MKLCAVIIASLLVCAAVASS). Residues 18 to 55 (ASSSDNQKEFAQEKEMTREETQSLGEHEKDDEVTGSEE) form a disordered region. A propeptide spanning residues 21 to 56 (SDNQKEFAQEKEMTREETQSLGEHEKDDEVTGSEER) is cleaved from the precursor. Basic and acidic residues predominate over residues 23–55 (NQKEFAQEKEMTREETQSLGEHEKDDEVTGSEE). Cystine bridges form between cysteine 58-cysteine 72, cysteine 65-cysteine 78, cysteine 69-cysteine 115, and cysteine 71-cysteine 91.

Belongs to the neurotoxin 03 (Tx2) family. 02 subfamily. HNTX-XV sub-subfamily. In terms of tissue distribution, expressed by the venom gland.

The protein resides in the secreted. In terms of biological role, putative ion channel inhibitor. The protein is Hainantoxin-XV.2 of Cyriopagopus hainanus (Chinese bird spider).